The chain runs to 551 residues: Hedycaryol synthase TPS20CT (551 aa).

Positions 266, 303, 307, 444, and 447 each coordinate (2E,6E)-farnesyl diphosphate. Mg(2+)-binding residues include aspartate 303 and aspartate 307. A DDXXD motif motif is present at residues aspartate 303–aspartate 307. Aspartate 447, serine 451, and glutamate 455 together coordinate Mg(2+).

Belongs to the terpene synthase family. Tpsb subfamily. The cofactor is Mg(2+). Mn(2+) is required as a cofactor. Highly expressed in glandular trichomes.

It carries out the reaction (2E,6E)-farnesyl diphosphate + H2O = (2E,6E)-hedycaryol + diphosphate. Its pathway is secondary metabolite biosynthesis; terpenoid biosynthesis. In terms of biological role, involved in sesquiterpene olefins biosynthesis, constituants of cannabinoids and terpenoids-rich resins. Catalyzes primarily the conversion of (2E)-farnesyl diphosphate to hedycaryol, which is spontaneously converted to elemol as a thermal degradation product. In Cannabis sativa (Hemp), this protein is Hedycaryol synthase TPS20CT.